The following is a 296-amino-acid chain: uncharacterized protein (296 aa).

An N-terminal signal peptide occupies residues 1 to 20; it reads MKKLLLIIITVFFAFNVAQA.

This is an uncharacterized protein from Rickettsia felis (strain ATCC VR-1525 / URRWXCal2) (Rickettsia azadi).